Here is a 386-residue protein sequence, read N- to C-terminus: Succinate--CoA ligase [ADP-forming] subunit beta (386 aa).

Residues 9-243 (KQLFRKYSIP…PAEDDPAEAE (235 aa)) form the ATP-grasp domain. ATP-binding positions include Lys45, 52–54 (GRG), Glu98, Val101, and Glu106. The Mg(2+) site is built by Asn198 and Asp212. Residues Asn263 and 320 to 322 (GIL) contribute to the substrate site.

Belongs to the succinate/malate CoA ligase beta subunit family. Heterotetramer of two alpha and two beta subunits. Requires Mg(2+) as cofactor.

It catalyses the reaction succinate + ATP + CoA = succinyl-CoA + ADP + phosphate. It carries out the reaction GTP + succinate + CoA = succinyl-CoA + GDP + phosphate. It functions in the pathway carbohydrate metabolism; tricarboxylic acid cycle; succinate from succinyl-CoA (ligase route): step 1/1. In terms of biological role, succinyl-CoA synthetase functions in the citric acid cycle (TCA), coupling the hydrolysis of succinyl-CoA to the synthesis of either ATP or GTP and thus represents the only step of substrate-level phosphorylation in the TCA. The beta subunit provides nucleotide specificity of the enzyme and binds the substrate succinate, while the binding sites for coenzyme A and phosphate are found in the alpha subunit. The sequence is that of Succinate--CoA ligase [ADP-forming] subunit beta from Desulfotalea psychrophila (strain LSv54 / DSM 12343).